We begin with the raw amino-acid sequence, 123 residues long: MPTINQLVRKGRQKPVYVNKVPALEACPQKRGVCTRVYTTTPKKPNSALRKVCKVRLTNGFEVISYIGGEGHNLQEHSVVLIRGGRVKDLPGVRYHTVRGSLDTAGVKDRKQARSKYGAKRPK.

At D89 the chain carries 3-methylthioaspartic acid. The segment at 104 to 123 (TAGVKDRKQARSKYGAKRPK) is disordered. Residues 113 to 123 (ARSKYGAKRPK) show a composition bias toward basic residues.

Belongs to the universal ribosomal protein uS12 family. In terms of assembly, part of the 30S ribosomal subunit. Contacts proteins S8 and S17. May interact with IF1 in the 30S initiation complex.

Its function is as follows. With S4 and S5 plays an important role in translational accuracy. In terms of biological role, interacts with and stabilizes bases of the 16S rRNA that are involved in tRNA selection in the A site and with the mRNA backbone. Located at the interface of the 30S and 50S subunits, it traverses the body of the 30S subunit contacting proteins on the other side and probably holding the rRNA structure together. The combined cluster of proteins S8, S12 and S17 appears to hold together the shoulder and platform of the 30S subunit. In Neisseria meningitidis serogroup C (strain 053442), this protein is Small ribosomal subunit protein uS12.